A 95-amino-acid chain; its full sequence is Hge-scorpine (95 aa).

An N-terminal signal peptide occupies residues 1 to 19 (MNTKLTVLCFLGIVTIVSC). Residues 55–94 (QFGCFANVDVKGDCKRHCKAEDKEGICHGTKCKCGVPISY) enclose the BetaSPN-type CS-alpha/beta domain. Intrachain disulfides connect Cys-58-Cys-81, Cys-68-Cys-86, and Cys-72-Cys-88.

The protein belongs to the long chain scorpion toxin family. Class 3 subfamily. Expressed by the venom gland.

It is found in the secreted. Its function is as follows. Has antibacterial activity against B.subtilis, but not against S.aureus. Also has hemolytic and cytolytic activities. Since cell lysis occurs at the tested concentrations, observation of activity on potassium channels is impossible. In terms of biological role, blocks Kv1.1/KCNA1 (IC(50)=185 nM) potassium channels. Shows a weak hemolytic activity. The polypeptide is Hge-scorpine (Hoffmannihadrurus gertschi (Scorpion)).